Here is a 342-residue protein sequence, read N- to C-terminus: Farnesyl pyrophosphate synthase 2 (342 aa).

3 residues coordinate isopentenyl diphosphate: Lys47, Arg50, and Gln86. Mg(2+) contacts are provided by Asp93 and Asp97. Arg102 is a dimethylallyl diphosphate binding site. Residue Arg103 participates in isopentenyl diphosphate binding. Residues Lys190, Thr191, Gln229, Lys246, and Lys255 each contribute to the dimethylallyl diphosphate site.

This sequence belongs to the FPP/GGPP synthase family. Requires Mg(2+) as cofactor.

It localises to the cytoplasm. It carries out the reaction isopentenyl diphosphate + dimethylallyl diphosphate = (2E)-geranyl diphosphate + diphosphate. The catalysed reaction is isopentenyl diphosphate + (2E)-geranyl diphosphate = (2E,6E)-farnesyl diphosphate + diphosphate. The protein operates within isoprenoid biosynthesis; farnesyl diphosphate biosynthesis; farnesyl diphosphate from geranyl diphosphate and isopentenyl diphosphate: step 1/1. It functions in the pathway isoprenoid biosynthesis; geranyl diphosphate biosynthesis; geranyl diphosphate from dimethylallyl diphosphate and isopentenyl diphosphate: step 1/1. Catalyzes the sequential condensation of isopentenyl pyrophosphate with the allylic pyrophosphates, dimethylallyl pyrophosphate, and then with the resultant geranylpyrophosphate to the ultimate product farnesyl pyrophosphate. In Arabidopsis thaliana (Mouse-ear cress), this protein is Farnesyl pyrophosphate synthase 2 (FPS2).